We begin with the raw amino-acid sequence, 260 residues long: Snake venom serine protease pallabin-2 (260 aa).

The first 18 residues, 1 to 18 (MVLIKVLANLLILQLSYA), serve as a signal peptide directing secretion. The propeptide occupies 19–24 (QKSSEL). The Peptidase S1 domain occupies 25–251 (IIGGDECNIN…HLDWIENIIA (227 aa)). 6 cysteine pairs are disulfide-bonded: cysteine 31-cysteine 163, cysteine 50-cysteine 66, cysteine 98-cysteine 258, cysteine 142-cysteine 212, cysteine 174-cysteine 191, and cysteine 202-cysteine 227. Residue histidine 65 is the Charge relay system of the active site. Asparagine 103 carries N-linked (GlcNAc...) asparagine glycosylation. The Charge relay system role is filled by aspartate 110. Serine 206 serves as the catalytic Charge relay system.

This sequence belongs to the peptidase S1 family. Snake venom subfamily. Monomer. In terms of tissue distribution, expressed by the venom gland.

The protein resides in the secreted. Snake venom serine protease that may act in the hemostasis system of the prey. The chain is Snake venom serine protease pallabin-2 (JZTHR7) from Gloydius halys (Chinese water mocassin).